The sequence spans 266 residues: Integral membrane protein 2B (266 aa).

The Cytoplasmic portion of the chain corresponds to 1–54 (MVKVTFNSALAQKEAKKXEPKSGEEALIIPPDTXAVDCKDPDEVVPVGQRRAWC). Residues 55–75 (WCMCFGLAFMLAGVILGGAYL) form a helical; Signal-anchor for type II membrane protein membrane-spanning segment. Residues 76–266 (YKYFALQPDD…KFAVETLICS (191 aa)) lie on the Lumenal side of the membrane. The necessary for interaction with APP and inhibitor effects on APP processing stretch occupies residues 102 to 134 (EPPANAPAARYQTIEENIKIFEEDGVEFISVPV). One can recognise a BRICHOS domain in the interval 137–231 (FADSDPANIV…LCHDKETYKL (95 aa)). 2 disulfide bridges follow: C164–C223 and C248–C265. N170 is a glycosylation site (N-linked (GlcNAc...) asparagine).

Belongs to the ITM2 family. As to quaternary structure, homodimer; disulfide-linked. Interacts with SPPL2A and SPPL2B. Interacts with APP. Mature BRI2 (mBRI2) interacts with the APP amyloid-beta A4 protein; the interaction occurs at the cell surface and in the endocytic compartments and enable alpha- and beta-secretase-induced APP cleavage inhibition. Mature BRI2 (mBRI2) interacts with the APP C99; the interaction occurs in the endocytic compartments and enable gamma-secretase-induced C99 cleavage inhibition. May form heterodimers with Bri23 peptide and APP amyloid-beta protein 40. Interacts with ADAM7 in sperm; the interaction increases following capacitation. In terms of processing, the ectodomain C-terminal part of the imBRI2 is processed by furin producing a secreted Bri23 peptide and a mature BRI2, membrane form (mBRI2). The remaining part of the ectodomain of mBRI2 containing the BRICHOS domain is cleaved by ADAM10 and is secreted (BRI2C, soluble form). The membrane-bound N-terminal fragment (BRI2C, membrane form) is further proteolytically processed by SPPL2A and SPPL2B through regulated intramembrane proteolysis producing a secreted C-peptide and a BRI2 intracellular domain (BRI2 ICD) released in the cytosol. Shedding by ADAM10 facilitates intramembrane cleavage but is not absolutely required for BRI2 ICD generation. Glycosylation at Asn-170 is important for cell surface localization, but doesn't affect furin- and ADAM10-induced proteolytic processing.

It is found in the golgi apparatus membrane. The protein resides in the cell membrane. Its subcellular location is the endosome membrane. The protein localises to the secreted. Plays a regulatory role in the processing of the amyloid-beta A4 precursor protein (APP) and acts as an inhibitor of the amyloid-beta peptide aggregation and fibrils deposition. Plays a role in the induction of neurite outgrowth. Functions as a protease inhibitor by blocking access of secretases to APP cleavage sites. Its function is as follows. Mature BRI2 (mBRI2) functions as a modulator of the amyloid-beta A4 precursor protein (APP) processing leading to a strong reduction in the secretion of secretase-processed amyloid-beta protein 40 and amyloid-beta protein 42. Functionally, bri23 peptide prevents aggregation of APP amyloid-beta protein 42 into toxic oligomers. The sequence is that of Integral membrane protein 2B (ITM2B) from Sus scrofa (Pig).